Reading from the N-terminus, the 559-residue chain is 2,3-bisphosphoglycerate-independent phosphoglycerate mutase (559 aa).

Mn(2+)-binding residues include D28 and S81. The Phosphoserine intermediate role is filled by S81. Residues H140, 170-171, R206, R213, 286-289, and K361 contribute to the substrate site; these read RD and RADR. D430, H434, D471, H472, and H501 together coordinate Mn(2+).

This sequence belongs to the BPG-independent phosphoglycerate mutase family. Monomer. The cofactor is Mn(2+). In terms of processing, the N-terminus is blocked. Found ubiquitously in germinating seed.

The protein resides in the cytoplasm. It catalyses the reaction (2R)-2-phosphoglycerate = (2R)-3-phosphoglycerate. Its pathway is carbohydrate degradation; glycolysis; pyruvate from D-glyceraldehyde 3-phosphate: step 3/5. In terms of biological role, catalyzes the interconversion of 2-phosphoglycerate and 3-phosphoglycerate. This is 2,3-bisphosphoglycerate-independent phosphoglycerate mutase from Zea mays (Maize).